We begin with the raw amino-acid sequence, 419 residues long: UDP-N-acetylglucosamine 1-carboxyvinyltransferase (419 aa).

22 to 23 is a binding site for phosphoenolpyruvate; it reads KN. Arg92 contributes to the UDP-N-acetyl-alpha-D-glucosamine binding site. The active-site Proton donor is Cys116. At Cys116 the chain carries 2-(S-cysteinyl)pyruvic acid O-phosphothioketal. Residues 121–125, Asp306, and Ile328 contribute to the UDP-N-acetyl-alpha-D-glucosamine site; that span reads RPVDQ.

This sequence belongs to the EPSP synthase family. MurA subfamily.

The protein resides in the cytoplasm. It catalyses the reaction phosphoenolpyruvate + UDP-N-acetyl-alpha-D-glucosamine = UDP-N-acetyl-3-O-(1-carboxyvinyl)-alpha-D-glucosamine + phosphate. The protein operates within cell wall biogenesis; peptidoglycan biosynthesis. Cell wall formation. Adds enolpyruvyl to UDP-N-acetylglucosamine. Target for the antibiotic phosphomycin. In Acinetobacter guillouiae (Acinetobacter genomosp. 11), this protein is UDP-N-acetylglucosamine 1-carboxyvinyltransferase.